We begin with the raw amino-acid sequence, 224 residues long: Ribonuclease T (224 aa).

The Exonuclease domain occupies 32 to 206 (VVVDVETGGF…YDTEKTAELF (175 aa)). Mg(2+) contacts are provided by Asp-35, Glu-37, His-193, and Asp-198. Catalysis depends on His-193, which acts as the Proton donor/acceptor.

It belongs to the RNase T family. In terms of assembly, homodimer. Mg(2+) is required as a cofactor.

Trims short 3' overhangs of a variety of RNA species, leaving a one or two nucleotide 3' overhang. Responsible for the end-turnover of tRNA: specifically removes the terminal AMP residue from uncharged tRNA (tRNA-C-C-A). Also appears to be involved in tRNA biosynthesis. This is Ribonuclease T from Pseudomonas paraeruginosa (strain DSM 24068 / PA7) (Pseudomonas aeruginosa (strain PA7)).